The sequence spans 208 residues: NAD(P)H-quinone oxidoreductase subunit I (208 aa).

2 consecutive 4Fe-4S ferredoxin-type domains span residues 55-84 (GRIH…VDWV) and 95-124 (RNYS…MTEE). [4Fe-4S] cluster is bound by residues C64, C67, C70, C74, C104, C107, C110, and C114.

It belongs to the complex I 23 kDa subunit family. In terms of assembly, NDH-1 is composed of at least 11 different subunits. Requires [4Fe-4S] cluster as cofactor.

The protein resides in the cellular thylakoid membrane. The catalysed reaction is a plastoquinone + NADH + (n+1) H(+)(in) = a plastoquinol + NAD(+) + n H(+)(out). The enzyme catalyses a plastoquinone + NADPH + (n+1) H(+)(in) = a plastoquinol + NADP(+) + n H(+)(out). NDH-1 shuttles electrons from an unknown electron donor, via FMN and iron-sulfur (Fe-S) centers, to quinones in the respiratory and/or the photosynthetic chain. The immediate electron acceptor for the enzyme in this species is believed to be plastoquinone. Couples the redox reaction to proton translocation, and thus conserves the redox energy in a proton gradient. This Prochlorococcus marinus (strain MIT 9301) protein is NAD(P)H-quinone oxidoreductase subunit I.